The primary structure comprises 356 residues: UDP-N-acetylglucosamine--N-acetylmuramyl-(pentapeptide) pyrophosphoryl-undecaprenol N-acetylglucosamine transferase (356 aa).

UDP-N-acetyl-alpha-D-glucosamine-binding positions include T11–G13, N123, R159, S187, I241, A260–E265, and Q286.

Belongs to the glycosyltransferase 28 family. MurG subfamily.

Its subcellular location is the cell inner membrane. The enzyme catalyses di-trans,octa-cis-undecaprenyl diphospho-N-acetyl-alpha-D-muramoyl-L-alanyl-D-glutamyl-meso-2,6-diaminopimeloyl-D-alanyl-D-alanine + UDP-N-acetyl-alpha-D-glucosamine = di-trans,octa-cis-undecaprenyl diphospho-[N-acetyl-alpha-D-glucosaminyl-(1-&gt;4)]-N-acetyl-alpha-D-muramoyl-L-alanyl-D-glutamyl-meso-2,6-diaminopimeloyl-D-alanyl-D-alanine + UDP + H(+). It participates in cell wall biogenesis; peptidoglycan biosynthesis. Cell wall formation. Catalyzes the transfer of a GlcNAc subunit on undecaprenyl-pyrophosphoryl-MurNAc-pentapeptide (lipid intermediate I) to form undecaprenyl-pyrophosphoryl-MurNAc-(pentapeptide)GlcNAc (lipid intermediate II). The polypeptide is UDP-N-acetylglucosamine--N-acetylmuramyl-(pentapeptide) pyrophosphoryl-undecaprenol N-acetylglucosamine transferase (Azoarcus sp. (strain BH72)).